A 433-amino-acid chain; its full sequence is 26S proteasome regulatory subunit 7 (433 aa).

Residues 1–22 (MPDYLGADQRKTKEDEKDDKPI) are disordered. The span at 8–22 (DQRKTKEDEKDDKPI) shows a compositional bias: basic and acidic residues. Lys116 is modified (N6-acetyllysine). An ATP-binding site is contributed by 216 to 223 (GPPGTGKT). Lys422 carries the N6-acetyllysine modification.

It belongs to the AAA ATPase family. In terms of assembly, component of the 19S proteasome regulatory particle complex. The 26S proteasome consists of a 20S core particle (CP) and two 19S regulatory subunits (RP). The regulatory particle is made of a lid composed of 9 subunits, a base containing 6 ATPases including PSMC2 and few additional components. Interacts with NDC80 and SQSTM1. Interacts with PAAF1. Interacts with TRIM5. Post-translationally, monoubiquitinated by RNF181. In terms of processing, phosphorylated. Dephosphorylated by UBLCP1 which impairs PSMC2 ATPase activity and disrupts 26S proteasome assembly.

It is found in the cytoplasm. Its function is as follows. Component of the 26S proteasome, a multiprotein complex involved in the ATP-dependent degradation of ubiquitinated proteins. This complex plays a key role in the maintenance of protein homeostasis by removing misfolded or damaged proteins, which could impair cellular functions, and by removing proteins whose functions are no longer required. Therefore, the proteasome participates in numerous cellular processes, including cell cycle progression, apoptosis, or DNA damage repair. PSMC2 belongs to the heterohexameric ring of AAA (ATPases associated with diverse cellular activities) proteins that unfolds ubiquitinated target proteins that are concurrently translocated into a proteolytic chamber and degraded into peptides. The protein is 26S proteasome regulatory subunit 7 (Psmc2) of Rattus norvegicus (Rat).